Consider the following 418-residue polypeptide: Actin-related protein 3B (418 aa).

It belongs to the actin family. ARP3 subfamily. Interacts with the Arp2/3 complex composed of ARP2, ARP3, ARPC1B, ARPC1B/p41-ARC, ARPC2/p34-ARC, ARPC3/p21-ARC, ARPC4/p20-ARC and ARPC5/p16-ARC.

The protein localises to the cytoplasm. It localises to the cytoskeleton. The protein resides in the cell projection. Plays a role in the organization of the actin cytoskeleton. May function as ATP-binding component of the Arp2/3 complex which is involved in regulation of actin polymerization and together with an activating nucleation-promoting factor (NPF) mediates the formation of branched actin networks. May decrease the metastatic potential of tumors. The polypeptide is Actin-related protein 3B (Actr3b) (Mus musculus (Mouse)).